Reading from the N-terminus, the 439-residue chain is Taxadien-5-alpha-ol O-acetyltransferase (439 aa).

Residues His164 and Asp373 each act as proton acceptor in the active site.

It belongs to the plant acyltransferase family.

It catalyses the reaction taxa-4(20),11-dien-5alpha-ol + acetyl-CoA = taxa-4(20),11-dien-5alpha-yl acetate + CoA. Its pathway is alkaloid biosynthesis; taxol biosynthesis; 10-deacetyl-2-debenzoylbaccatin III from taxa-4(20),11-dien-5alpha-ol: step 1/3. The polypeptide is Taxadien-5-alpha-ol O-acetyltransferase (Taxus chinensis (Chinese yew)).